The following is a 320-amino-acid chain: ATP-dependent 6-phosphofructokinase (320 aa).

Gly12 serves as a coordination point for ATP. Position 22–26 (22–26) interacts with ADP; that stretch reads RGVVR. ATP-binding positions include 73–74 and 103–106; these read RF and GDGS. Residue Asp104 coordinates Mg(2+). Position 126–128 (126–128) interacts with substrate; sequence TID. Asp128 serves as the catalytic Proton acceptor. Position 155 (Arg155) interacts with ADP. Substrate is bound by residues Arg163 and 170–172; that span reads MGR. Residues 186 to 188, Lys212, and 214 to 216 each bind ADP; these read GCE and KKH. Residues Glu223, Arg244, and 250 to 253 each bind substrate; that span reads HIQR.

This sequence belongs to the phosphofructokinase type A (PFKA) family. ATP-dependent PFK group I subfamily. Prokaryotic clade 'B1' sub-subfamily. Homotetramer. Mg(2+) is required as a cofactor.

The protein resides in the cytoplasm. The enzyme catalyses beta-D-fructose 6-phosphate + ATP = beta-D-fructose 1,6-bisphosphate + ADP + H(+). It functions in the pathway carbohydrate degradation; glycolysis; D-glyceraldehyde 3-phosphate and glycerone phosphate from D-glucose: step 3/4. Allosterically activated by ADP and other diphosphonucleosides, and allosterically inhibited by phosphoenolpyruvate. In terms of biological role, catalyzes the phosphorylation of D-fructose 6-phosphate to fructose 1,6-bisphosphate by ATP, the first committing step of glycolysis. This is ATP-dependent 6-phosphofructokinase from Vibrio parahaemolyticus serotype O3:K6 (strain RIMD 2210633).